Consider the following 86-residue polypeptide: Small ribosomal subunit protein bS20 (86 aa).

Basic and acidic residues predominate over residues 1–16 (MANIKSQEKRIRTNER). A disordered region spans residues 1–25 (MANIKSQEKRIRTNERRRLRNQSVK).

Belongs to the bacterial ribosomal protein bS20 family.

Binds directly to 16S ribosomal RNA. In Mycobacterium sp. (strain JLS), this protein is Small ribosomal subunit protein bS20.